The sequence spans 179 residues: Cellular nucleic acid-binding protein homolog (179 aa).

CCHC-type zinc fingers lie at residues 17–34 (PRCY…ECTK), 36–53 (SICY…ECTE), 58–75 (KTCY…DCPS), 83–100 (AECY…DCRT), 116–133 (MNCY…DCTM), 135–152 (VKCY…ECQQ), and 157–174 (QLCY…NCTS).

This sequence to human CNBP and to retroviral nucleic acid binding proteins (NBP). Phosphorylated.

Its subcellular location is the nucleus. Functionally, acts in the sexual differentiation pathway. Is required for efficient conjugation. Double-stranded DNA-binding protein. This is Cellular nucleic acid-binding protein homolog (byr3) from Schizosaccharomyces pombe (strain 972 / ATCC 24843) (Fission yeast).